Consider the following 386-residue polypeptide: Phosphate acyltransferase (386 aa).

Positions proline 359 to threonine 386 are disordered. Residues glutamine 377 to threonine 386 show a composition bias toward polar residues.

This sequence belongs to the PlsX family. In terms of assembly, homodimer. Probably interacts with PlsY.

It is found in the cytoplasm. It catalyses the reaction a fatty acyl-[ACP] + phosphate = an acyl phosphate + holo-[ACP]. Its pathway is lipid metabolism; phospholipid metabolism. In terms of biological role, catalyzes the reversible formation of acyl-phosphate (acyl-PO(4)) from acyl-[acyl-carrier-protein] (acyl-ACP). This enzyme utilizes acyl-ACP as fatty acyl donor, but not acyl-CoA. The polypeptide is Phosphate acyltransferase (Beijerinckia indica subsp. indica (strain ATCC 9039 / DSM 1715 / NCIMB 8712)).